The primary structure comprises 491 residues: MELYFSWLILALAIFIGTYAFVFGVLRRVNEWYHCGKLGEMKHSLPPGDMGWPLVGNMLSHQKAFKSSEPQSFIYNLFERYGRKGIYRNHIFGSPCVIVVAPEACKQVFLDDENFKMGYPTSTNKLTFRGSFITASKEGQKRIRKLATSPLKGHKAIVVYIDNIEEIVIKSLKGWASLDTPIEFLTEMRKATFKIIANIFLGSSSDSVIGSVEKHYIDYAHGLISPFPINLPGFSFHKAMKARDMLGEILQPVLNERRAMKSDEQKGRKGLIDLLMEVEDENGTKLDDLDIIDMLISFLSAGHESSAHIATWALIHLHKHPQTLRKAKEEQEDIIKKRPSTQKGLTIEEIKQMEYLAKVIAETLRMTNLSPSSFREAEADVNIQGYFIPKGWKVLVYNRGVHYNPENYPDPKQFDPSRWDNHTTRPGSFIPFGGGSRICPGADLAKLEISIFIHYFLLNYKLELQNPECPAEYLPVPRPSDQCLAKVVGFK.

Residues 5 to 25 (FSWLILALAIFIGTYAFVFGV) traverse the membrane as a helical segment. C439 contacts heme.

It belongs to the cytochrome P450 family. Requires heme as cofactor. Expressed in maturing fruits and in juice vesicles.

Its subcellular location is the membrane. It carries out the reaction luvungin A + reduced [NADPH--hemoprotein reductase] + O2 = (1S)-1-hydroxy-luvungin A + oxidized [NADPH--hemoprotein reductase] + H2O + H(+). It participates in secondary metabolite biosynthesis; terpenoid biosynthesis. In terms of biological role, monooxygenase involved in the biosynthesis of limonoids triterpene natural products such as limonin, a compound with insecticidal activity responsible for the bitter taste in citrus. Catalyzes the conversion of luvungin A to (1S)-1-hydroxy-luvungin A. This is (1S)-1-hydroxy-luvungin A synthase CYP88A37 from Citrus sinensis (Sweet orange).